Consider the following 926-residue polypeptide: Probable zinc protease PqqL (926 aa).

His79 contacts Zn(2+). Glu82 serves as the catalytic Proton acceptor. Residues His83 and Glu159 each coordinate Zn(2+).

The protein belongs to the peptidase M16 family. Zn(2+) is required as a cofactor.

This chain is Probable zinc protease PqqL (pqqL), found in Haemophilus influenzae (strain ATCC 51907 / DSM 11121 / KW20 / Rd).